The primary structure comprises 927 residues: Protein unc-45 homolog B (927 aa).

TPR repeat units follow at residues 4–37 (PVQL…ITDK), 41–74 (AVLY…DASD), and 76–108 (KALF…EPKN). ARM repeat units lie at residues 167–206 (DAGA…GMCT), 209–248 (RARA…NIVD), and 746–785 (DKLR…NLAV).

The protein resides in the cytoplasm. The protein localises to the myofibril. Its subcellular location is the sarcomere. It is found in the z line. It localises to the a band. The protein resides in the perinuclear region. The protein localises to the cytosol. Functionally, acts as a co-chaperone for HSP90 and is required for proper folding of the myosin motor domain. Plays a role in sarcomere formation during muscle cell assembly. Is necessary for normal early lens development. This is Protein unc-45 homolog B from Xenopus laevis (African clawed frog).